The sequence spans 615 residues: Sorting nexin-41 (615 aa).

The interval 1-71 (MWNDEDNNPY…DEGDYVGQAN (71 aa)) is disordered. Over residues 42–53 (SHSSNPDISDFS) the composition is skewed to low complexity. The PX domain maps to 93-210 (PDMPILITDA…RFLDPNVSWS (118 aa)). The a 1,2-diacyl-sn-glycero-3-phospho-(1D-myo-inositol-3-phosphate) site is built by arginine 127, serine 129, lysine 153, and arginine 176. Disordered regions lie at residues 218 to 277 (ASSV…RFPP) and 432 to 504 (QYLN…RKTS). Composition is skewed to polar residues over residues 252–263 (LKSTSGTSSSPN) and 434–446 (LNRT…TKQR). The segment covering 447–456 (SLSTSSATSS) has biased composition (low complexity).

Belongs to the sorting nexin family.

The protein resides in the endosome membrane. It is found in the endomembrane system. May be required for cytoplasm to vacuole transport (Cvt) and pexophagy. This is Sorting nexin-41 (snx41) from Emericella nidulans (strain FGSC A4 / ATCC 38163 / CBS 112.46 / NRRL 194 / M139) (Aspergillus nidulans).